The primary structure comprises 92 residues: Putative septation protein SpoVG (92 aa).

It belongs to the SpoVG family.

In terms of biological role, could be involved in septation. The protein is Putative septation protein SpoVG of Clostridium botulinum (strain Eklund 17B / Type B).